A 107-amino-acid polypeptide reads, in one-letter code: Integration host factor subunit beta (107 aa).

Residues 78–107 form a disordered region; that stretch reads PHFKPGKELRERVDGRAGEPLKADEPDDER. The span at 82–101 shows a compositional bias: basic and acidic residues; the sequence is PGKELRERVDGRAGEPLKAD.

Belongs to the bacterial histone-like protein family. Heterodimer of an alpha and a beta chain.

Functionally, this protein is one of the two subunits of integration host factor, a specific DNA-binding protein that functions in genetic recombination as well as in transcriptional and translational control. This chain is Integration host factor subunit beta, found in Burkholderia multivorans (strain ATCC 17616 / 249).